Consider the following 255-residue polypeptide: Putative mediator of RNA polymerase II transcription subunit 30 (255 aa).

The span at 58–107 (QSQQLQQPQSIPSSTNNSTNTNTNNSTTTTTTSSTSSTTTPTTTTSTTSP) shows a compositional bias: low complexity. Disordered stretches follow at residues 58-133 (QSQQ…TLNL) and 177-207 (NIDN…IEKQ). Polar residues predominate over residues 108 to 133 (LNSKDSTATTTTKEQPSSPTLPTLNL). Basic and acidic residues predominate over residues 177–189 (NIDNDDTIMKDDN). Low complexity predominate over residues 190–201 (NNSSTSAPTTTT).

This sequence belongs to the Mediator complex subunit 30 family. Highly divergent. Component of the Mediator complex.

Its subcellular location is the nucleus. In terms of biological role, component of the Mediator complex, a coactivator involved in the regulated transcription of nearly all RNA polymerase II-dependent genes. Mediator functions as a bridge to convey information from gene-specific regulatory proteins to the basal RNA polymerase II transcription machinery. Mediator is recruited to promoters by direct interactions with regulatory proteins and serves as a scaffold for the assembly of a functional preinitiation complex with RNA polymerase II and the general transcription factors. This chain is Putative mediator of RNA polymerase II transcription subunit 30 (med30), found in Dictyostelium discoideum (Social amoeba).